Here is a 54-residue protein sequence, read N- to C-terminus: Ovomucoid (54 aa).

Residues 4–54 (VDCSDYPKPACLLEYMPLCGSDNKTYDNKCSFCNAVVDSNGTLSLSHFGKC) form the Kazal-like domain. Cystine bridges form between C6–C36, C14–C33, and C22–C54. N-linked (GlcNAc...) asparagine glycosylation is present at N43.

Its subcellular location is the secreted. This is Ovomucoid from Opisthocomus hoazin (Hoatzin).